A 283-amino-acid chain; its full sequence is MAEITASLVKELRDRTGAGMMECKKALVEANGDIELAIDNMRKSGQAKAAKKAGRVAAEGVILARVENGFGVLVEMNCETDFVAKDAGFLGLANEVADFAAANKGTTIEALQAQFEEKRAALVAKIGENMNIRRVAYLDGQVIAQYLHGAKIGVLVAGEGSDDELKKVAMHVAASKPEFVNPEDVSAEVVEHERQIQIDIAINSGKPKEIAEKMVEGRMKKFTGEVSLTGQAFVMDPSVSVGDFLKSVNTSVSNFIRLEVGEGIEKKEEDFAAEVAKITGGNA.

The interval 80–83 (TDFV) is involved in Mg(2+) ion dislocation from EF-Tu.

The protein belongs to the EF-Ts family.

It is found in the cytoplasm. Associates with the EF-Tu.GDP complex and induces the exchange of GDP to GTP. It remains bound to the aminoacyl-tRNA.EF-Tu.GTP complex up to the GTP hydrolysis stage on the ribosome. The polypeptide is Elongation factor Ts (Haemophilus influenzae (strain PittGG)).